Consider the following 346-residue polypeptide: Deoxyhypusine hydroxylase (346 aa).

HEAT-like PBS-type repeat units lie at residues 71-100, 104-133, 213-242, 246-275, and 279-320; these read VLLR…LNDT, LMVR…LNDE, LKLR…LIKD, AIFR…LQNV, and EMVR…SKDA. Residues His75, His108, and Glu109 each contribute to the Fe cation site. The Fe cation site is built by His250, His283, and Glu284.

It belongs to the deoxyhypusine hydroxylase family. It depends on Fe(2+) as a cofactor.

It carries out the reaction [eIF5A protein]-deoxyhypusine + AH2 + O2 = [eIF5A protein]-hypusine + A + H2O. Its pathway is protein modification; eIF5A hypusination. Functionally, catalyzes the hydroxylation of the N(6)-(4-aminobutyl)-L-lysine intermediate produced by deoxyhypusine synthase/DHPS on a critical lysine of the eukaryotic translation initiation factor 5A/eIF-5A. This is the second step of the post-translational modification of that lysine into an unusual amino acid residue named hypusine. Hypusination is unique to mature eIF-5A factor and is essential for its function. This Plasmodium vivax (strain Salvador I) protein is Deoxyhypusine hydroxylase.